Consider the following 447-residue polypeptide: Glucose-6-phosphate isomerase (447 aa).

E287 acts as the Proton donor in catalysis. Residues H308 and K422 contribute to the active site.

It belongs to the GPI family.

It localises to the cytoplasm. It catalyses the reaction alpha-D-glucose 6-phosphate = beta-D-fructose 6-phosphate. The protein operates within carbohydrate biosynthesis; gluconeogenesis. Its pathway is carbohydrate degradation; glycolysis; D-glyceraldehyde 3-phosphate and glycerone phosphate from D-glucose: step 2/4. Catalyzes the reversible isomerization of glucose-6-phosphate to fructose-6-phosphate. The protein is Glucose-6-phosphate isomerase of Heliobacterium modesticaldum (strain ATCC 51547 / Ice1).